The following is a 145-amino-acid chain: Probable disulfide formation protein (145 aa).

A helical transmembrane segment spans residues 9 to 28 (ENLLLLIWVQAFLALAGSLF). Cys-38 and Cys-41 are disulfide-bonded. Helical transmembrane passes span 43–62 (YQRI…AIKK) and 69–86 (PGLF…YHYL). A disulfide bridge links Cys-100 with Cys-106. A helical membrane pass occupies residues 115-137 (GFISIPFMAGVAFLIIFVLHLLI).

The protein belongs to the DsbB family. BdbC subfamily.

The protein localises to the cell membrane. Functionally, required for disulfide bond formation in some proteins. This chain is Probable disulfide formation protein, found in Oceanobacillus iheyensis (strain DSM 14371 / CIP 107618 / JCM 11309 / KCTC 3954 / HTE831).